The primary structure comprises 870 residues: S-linalool synthase (870 aa).

Mg(2+) contacts are provided by D547, D551, N689, S693, and E697. The short motif at 547–551 (DDFFD) is the DDXXD motif element.

It belongs to the terpene synthase family. Mg(2+) serves as cofactor. Mn(2+) is required as a cofactor. In terms of tissue distribution, highly expressed in cells of the transmitting tract of the stigma and style and in the epidermal cells of petals, as well as in stamens.

The catalysed reaction is (2E)-geranyl diphosphate + H2O = (S)-linalool + diphosphate. Functionally, involved in the biosynthesis of the acyclic monoterpene S-linalool, a major component of the strong sweet scent of the C.breweri flowers. The chain is S-linalool synthase (LIS) from Clarkia breweri (Fairy fans).